Reading from the N-terminus, the 144-residue chain is MAESNNRMVVSLEDLLAQADALRKEIDALQKLRDEIAESLNAARSAKEAINLIKGQGKDLLLSADRRGFVLLKVTEIPSSKVLVNLGLGYYAEIEPDQASKILDEREEQLNKSLQDITARLNNAVNAYTQIAEILNRAQQQQGE.

The protein belongs to the prefoldin alpha subunit family. Heterohexamer of two alpha and four beta subunits.

The protein localises to the cytoplasm. Its function is as follows. Molecular chaperone capable of stabilizing a range of proteins. Seems to fulfill an ATP-independent, HSP70-like function in archaeal de novo protein folding. The protein is Prefoldin subunit alpha of Metallosphaera sedula (strain ATCC 51363 / DSM 5348 / JCM 9185 / NBRC 15509 / TH2).